Reading from the N-terminus, the 502-residue chain is Biotin biosynthesis bifunctional protein BioHC (502 aa).

Residues 1 to 224 (MTRPVLVLVH…IHVIAGSAHA (224 aa)) are carboxylesterase. Residue Trp12 participates in substrate binding. The active-site Nucleophile is Ser72. 134 to 138 (FTGLL) lines the substrate pocket. Residues Asp195 and His223 contribute to the active site. His223 provides a ligand contact to substrate. A malonyl-ACP O-methyltransferase region spans residues 225 to 502 (VHWSQPQQLI…EVYYLVLCKP (278 aa)).

It in the N-terminal section; belongs to the AB hydrolase superfamily. Carboxylesterase BioH family. In the C-terminal section; belongs to the methyltransferase superfamily.

The catalysed reaction is a carboxylic ester + H2O = an alcohol + a carboxylate + H(+). The enzyme catalyses malonyl-[ACP] + S-adenosyl-L-methionine = malonyl-[ACP] methyl ester + S-adenosyl-L-homocysteine. It participates in cofactor biosynthesis; biotin biosynthesis. Its function is as follows. Converts the free carboxyl group of a malonyl-thioester to its methyl ester by transfer of a methyl group from S-adenosyl-L-methionine (SAM). It allows to synthesize pimeloyl-ACP via the fatty acid synthetic pathway. In terms of biological role, the physiological role of BioH is to remove the methyl group introduced by BioC when the pimeloyl moiety is complete. It allows to synthesize pimeloyl-ACP via the fatty acid synthetic pathway through the hydrolysis of the ester bonds of pimeloyl-ACP esters. This Cellvibrio japonicus (strain Ueda107) (Pseudomonas fluorescens subsp. cellulosa) protein is Biotin biosynthesis bifunctional protein BioHC (bioC).